Reading from the N-terminus, the 434-residue chain is Tol-Pal system protein TolB (434 aa).

Positions Met1–Ala24 are cleaved as a signal peptide.

It belongs to the TolB family. As to quaternary structure, the Tol-Pal system is composed of five core proteins: the inner membrane proteins TolA, TolQ and TolR, the periplasmic protein TolB and the outer membrane protein Pal. They form a network linking the inner and outer membranes and the peptidoglycan layer.

Its subcellular location is the periplasm. Part of the Tol-Pal system, which plays a role in outer membrane invagination during cell division and is important for maintaining outer membrane integrity. This Histophilus somni (strain 129Pt) (Haemophilus somnus) protein is Tol-Pal system protein TolB.